Consider the following 721-residue polypeptide: Actin-like protein arp5 (721 aa).

A coiled-coil region spans residues 266-368 (EAAAQEKSQE…RDQQRQEESE (103 aa)). Residues 486-507 (ATLASEQPIQKRKRKDQSEDNF) are disordered.

Belongs to the actin family. Component of the INO80 chromatin remodeling complex.

Its subcellular location is the nucleus. In terms of biological role, component of the INO80 complex which remodels chromatin by shifting nucleosomes and is involved in DNA repair. This Schizosaccharomyces pombe (strain 972 / ATCC 24843) (Fission yeast) protein is Actin-like protein arp5 (arp5).